The primary structure comprises 257 residues: Putative hydro-lyase YcsI (257 aa).

It belongs to the D-glutamate cyclase family.

This Bacillus subtilis (strain 168) protein is Putative hydro-lyase YcsI (ycsI).